Here is a 622-residue protein sequence, read N- to C-terminus: Elongation factor 4 (622 aa).

The tr-type G domain occupies 17–201 (ALIRNFCIIA…KVVAEVPAPV (185 aa)). Residues 29–34 (DHGKST) and 148–151 (NKID) contribute to the GTP site.

Belongs to the TRAFAC class translation factor GTPase superfamily. Classic translation factor GTPase family. LepA subfamily.

The protein resides in the cell membrane. It catalyses the reaction GTP + H2O = GDP + phosphate + H(+). Required for accurate and efficient protein synthesis under certain stress conditions. May act as a fidelity factor of the translation reaction, by catalyzing a one-codon backward translocation of tRNAs on improperly translocated ribosomes. Back-translocation proceeds from a post-translocation (POST) complex to a pre-translocation (PRE) complex, thus giving elongation factor G a second chance to translocate the tRNAs correctly. Binds to ribosomes in a GTP-dependent manner. In Streptomyces avermitilis (strain ATCC 31267 / DSM 46492 / JCM 5070 / NBRC 14893 / NCIMB 12804 / NRRL 8165 / MA-4680), this protein is Elongation factor 4.